The chain runs to 225 residues: UPF0758 protein Shewmr7_0359 (225 aa).

Positions 102-224 (VLTNPDLTRD…IVSFAERGWI (123 aa)) constitute an MPN domain. Zn(2+)-binding residues include His173, His175, and Asp186. Positions 173–186 (HNHPSGIAEPSQAD) match the JAMM motif motif.

Belongs to the UPF0758 family.

The protein is UPF0758 protein Shewmr7_0359 of Shewanella sp. (strain MR-7).